A 401-amino-acid polypeptide reads, in one-letter code: Exodeoxyribonuclease 7 large subunit (401 aa).

This sequence belongs to the XseA family. Heterooligomer composed of large and small subunits.

It is found in the cytoplasm. The enzyme catalyses Exonucleolytic cleavage in either 5'- to 3'- or 3'- to 5'-direction to yield nucleoside 5'-phosphates.. In terms of biological role, bidirectionally degrades single-stranded DNA into large acid-insoluble oligonucleotides, which are then degraded further into small acid-soluble oligonucleotides. This Thermoanaerobacter pseudethanolicus (strain ATCC 33223 / 39E) (Clostridium thermohydrosulfuricum) protein is Exodeoxyribonuclease 7 large subunit.